Reading from the N-terminus, the 168-residue chain is S-ribosylhomocysteine lyase (168 aa).

Fe cation is bound by residues histidine 54, histidine 58, and cysteine 128.

The protein belongs to the LuxS family. In terms of assembly, homodimer. Fe cation is required as a cofactor.

It carries out the reaction S-(5-deoxy-D-ribos-5-yl)-L-homocysteine = (S)-4,5-dihydroxypentane-2,3-dione + L-homocysteine. Involved in the synthesis of autoinducer 2 (AI-2) which is secreted by bacteria and is used to communicate both the cell density and the metabolic potential of the environment. The regulation of gene expression in response to changes in cell density is called quorum sensing. Catalyzes the transformation of S-ribosylhomocysteine (RHC) to homocysteine (HC) and 4,5-dihydroxy-2,3-pentadione (DPD). The sequence is that of S-ribosylhomocysteine lyase from Neisseria meningitidis serogroup C (strain 053442).